Here is a 316-residue protein sequence, read N- to C-terminus: Glutathione synthetase (316 aa).

Positions 125–310 (KLFTAWFSDL…ITGMLMDAIE (186 aa)) constitute an ATP-grasp domain. 151–207 (WEKHSDIILKPLDGMGGASIFRVKEGDPNLGVIAETLTEHGTRYCMAQNYLPAIKDG) provides a ligand contact to ATP. Positions 281 and 283 each coordinate Mg(2+).

Belongs to the prokaryotic GSH synthase family. It depends on Mg(2+) as a cofactor. The cofactor is Mn(2+).

The catalysed reaction is gamma-L-glutamyl-L-cysteine + glycine + ATP = glutathione + ADP + phosphate + H(+). It participates in sulfur metabolism; glutathione biosynthesis; glutathione from L-cysteine and L-glutamate: step 2/2. The sequence is that of Glutathione synthetase from Escherichia coli O6:H1 (strain CFT073 / ATCC 700928 / UPEC).